A 1359-amino-acid chain; its full sequence is ABC transporter C family member 1 (1359 aa).

Positions asparagine 111–serine 394 constitute an ABC transmembrane type-1 1 domain. The next 6 membrane-spanning stretches (helical) occupy residues isoleucine 119–isoleucine 139, serine 147–phenylalanine 167, leucine 214–phenylalanine 234, leucine 244–isoleucine 264, methionine 332–leucine 352, and isoleucine 363–leucine 383. A disordered region spans residues proline 409–glutamine 478. The segment covering glutamate 420–serine 433 has biased composition (acidic residues). Residues histidine 440–aspartate 450 show a composition bias toward polar residues. Residues glycine 459–glutamine 478 show a composition bias toward low complexity. Residues glutamine 470–lysine 690 enclose the ABC transporter 1 domain. Glycine 502–threonine 509 contributes to the ATP binding site. In terms of domain architecture, ABC transmembrane type-1 2 spans leucine 763 to arginine 1061. 5 consecutive transmembrane segments (helical) span residues glycine 773–tyrosine 793, isoleucine 819–alanine 839, valine 884–valine 904, isoleucine 906–isoleucine 926, and tryptophan 999–phenylalanine 1021. A coiled-coil region spans residues asparagine 1073–aspartate 1102. The ABC transporter 2 domain occupies isoleucine 1116 to lysine 1350. Position 1150 to 1157 (glycine 1150 to serine 1157) interacts with ATP.

This sequence belongs to the ABC transporter superfamily. ABCC family. Conjugate transporter (TC 3.A.1.208) subfamily.

It is found in the membrane. The protein is ABC transporter C family member 1 (abcC1) of Dictyostelium discoideum (Social amoeba).